A 200-amino-acid polypeptide reads, in one-letter code: Large ribosomal subunit protein uL4 (200 aa).

Residues 43-71 are disordered; sequence RAQKTRAEVSGSGKKPWRQKGTGRARSGD.

Belongs to the universal ribosomal protein uL4 family. In terms of assembly, part of the 50S ribosomal subunit.

Functionally, one of the primary rRNA binding proteins, this protein initially binds near the 5'-end of the 23S rRNA. It is important during the early stages of 50S assembly. It makes multiple contacts with different domains of the 23S rRNA in the assembled 50S subunit and ribosome. Forms part of the polypeptide exit tunnel. This chain is Large ribosomal subunit protein uL4, found in Aggregatibacter actinomycetemcomitans (Actinobacillus actinomycetemcomitans).